Consider the following 594-residue polypeptide: Alanine--tRNA ligase (594 aa).

Zn(2+) is bound by residues histidine 456, histidine 460, cysteine 558, and histidine 562.

Belongs to the class-II aminoacyl-tRNA synthetase family. Requires Zn(2+) as cofactor.

Its subcellular location is the cytoplasm. The enzyme catalyses tRNA(Ala) + L-alanine + ATP = L-alanyl-tRNA(Ala) + AMP + diphosphate. Its function is as follows. Catalyzes the attachment of alanine to tRNA(Ala) in a two-step reaction: alanine is first activated by ATP to form Ala-AMP and then transferred to the acceptor end of tRNA(Ala). Also edits incorrectly charged Ser-tRNA(Ala) and Gly-tRNA(Ala) via its editing domain. The protein is Alanine--tRNA ligase (alaS) of Borreliella afzelii (strain PKo) (Borrelia afzelii).